The sequence spans 136 residues: Large ribosomal subunit protein uL16c (136 aa).

Residues 1 to 20 (MLSPKRTRFRKQHRGRMKGK) are disordered.

The protein belongs to the universal ribosomal protein uL16 family. In terms of assembly, part of the 50S ribosomal subunit.

It localises to the plastid. The protein localises to the chloroplast. This Lolium perenne (Perennial ryegrass) protein is Large ribosomal subunit protein uL16c.